The sequence spans 173 residues: Regulatory protein RecX (173 aa).

Belongs to the RecX family.

The protein resides in the cytoplasm. Modulates RecA activity. This chain is Regulatory protein RecX, found in Mycobacterium avium (strain 104).